Consider the following 580-residue polypeptide: Capsid vertex component 2 (580 aa).

Interaction with major capsid protein/MCP stretches follow at residues 1–49 and 1–50; these read MDPY…ETAA and MDPY…TAAE. A disordered region spans residues 108 to 129; it reads AEEADAARGDEPAGGGDGGAPP. Positions 119 to 128 are enriched in gly residues; it reads PAGGGDGGAP.

Belongs to the herpesviridae CVC2 protein family. As to quaternary structure, heterodimerizes with CVC1. Interacts with major capsid protein/MCP and triplex capsid protein 1/TRX1 at the pentamer vertices. Interacts with the large tegument protein/LTP. Interacts with host NUP214; this interaction might be essential to the capsid docking to the host nuclear pore. Interacts with host TMEM250.

It localises to the virion. The protein localises to the host nucleus. Functionally, capsid vertex-specific component that plays a role during viral DNA encapsidation, assuring correct genome cleavage and presumably stabilizing capsids that contain full-length viral genomes. Participates in the interaction between the capsid and the tegument through interaction with the large tegument protein/LTP. May mediate the capsid docking to the nuclear pore allowing entry of the viral genome into the host nucleus through binding to host nucleoporins NUP214. This chain is Capsid vertex component 2, found in Human herpesvirus 1 (strain 17) (HHV-1).